The primary structure comprises 259 residues: Phosphatidylglycerol--prolipoprotein diacylglyceryl transferase (259 aa).

The next 4 helical transmembrane spans lie at 16–36 (LAISWYSLSYVIGILLGWFYA), 55–75 (FITYAVIGIIVGGRLGFVLLY), 92–112 (EGGMSFHGGALGGIIAAYLFC), and 117–137 (INFLSLTDIIAPVVPIGLFLG). Arg138 provides a ligand contact to a 1,2-diacyl-sn-glycero-3-phospho-(1'-sn-glycerol). 3 helical membrane passes run 172 to 192 (QLYEAFFEGLVLFSILAYATF), 201 to 221 (GLNSGIFFTFYGLFRITIEIF), and 228 to 248 (IGFILDSLTMGQILSVPMLLL).

It belongs to the Lgt family.

Its subcellular location is the cell inner membrane. It catalyses the reaction L-cysteinyl-[prolipoprotein] + a 1,2-diacyl-sn-glycero-3-phospho-(1'-sn-glycerol) = an S-1,2-diacyl-sn-glyceryl-L-cysteinyl-[prolipoprotein] + sn-glycerol 1-phosphate + H(+). It participates in protein modification; lipoprotein biosynthesis (diacylglyceryl transfer). Catalyzes the transfer of the diacylglyceryl group from phosphatidylglycerol to the sulfhydryl group of the N-terminal cysteine of a prolipoprotein, the first step in the formation of mature lipoproteins. This Rickettsia rickettsii (strain Iowa) protein is Phosphatidylglycerol--prolipoprotein diacylglyceryl transferase.